Consider the following 156-residue polypeptide: Small ribosomal subunit protein uS7 (156 aa).

Belongs to the universal ribosomal protein uS7 family. As to quaternary structure, part of the 30S ribosomal subunit. Contacts proteins S9 and S11.

One of the primary rRNA binding proteins, it binds directly to 16S rRNA where it nucleates assembly of the head domain of the 30S subunit. Is located at the subunit interface close to the decoding center, probably blocks exit of the E-site tRNA. In Campylobacter curvus (strain 525.92), this protein is Small ribosomal subunit protein uS7.